A 245-amino-acid chain; its full sequence is 1-(5-phosphoribosyl)-5-[(5-phosphoribosylamino)methylideneamino] imidazole-4-carboxamide isomerase (245 aa).

Residue Asp-7 is the Proton acceptor of the active site. Asp-129 (proton donor) is an active-site residue.

Belongs to the HisA/HisF family.

Its subcellular location is the cytoplasm. It carries out the reaction 1-(5-phospho-beta-D-ribosyl)-5-[(5-phospho-beta-D-ribosylamino)methylideneamino]imidazole-4-carboxamide = 5-[(5-phospho-1-deoxy-D-ribulos-1-ylimino)methylamino]-1-(5-phospho-beta-D-ribosyl)imidazole-4-carboxamide. Its pathway is amino-acid biosynthesis; L-histidine biosynthesis; L-histidine from 5-phospho-alpha-D-ribose 1-diphosphate: step 4/9. The sequence is that of 1-(5-phosphoribosyl)-5-[(5-phosphoribosylamino)methylideneamino] imidazole-4-carboxamide isomerase from Yersinia pestis bv. Antiqua (strain Antiqua).